A 312-amino-acid chain; its full sequence is Polyamine aminopropyltransferase (312 aa).

The PABS domain occupies 7–247 (FFWAQEYFTP…GPLGFALAAQ (241 aa)). Q36 contacts S-methyl-5'-thioadenosine. Spermidine-binding residues include H67 and E95. S-methyl-5'-thioadenosine-binding positions include D115 and 147–148 (DA). The active-site Proton acceptor is D165. P174 serves as a coordination point for S-methyl-5'-thioadenosine.

This sequence belongs to the spermidine/spermine synthase family. Homodimer or homotetramer.

It localises to the cytoplasm. It catalyses the reaction S-adenosyl 3-(methylsulfanyl)propylamine + putrescine = S-methyl-5'-thioadenosine + spermidine + H(+). It participates in amine and polyamine biosynthesis; spermidine biosynthesis; spermidine from putrescine: step 1/1. Functionally, catalyzes the irreversible transfer of a propylamine group from the amino donor S-adenosylmethioninamine (decarboxy-AdoMet) to putrescine (1,4-diaminobutane) to yield spermidine. This is Polyamine aminopropyltransferase from Synechococcus sp. (strain JA-3-3Ab) (Cyanobacteria bacterium Yellowstone A-Prime).